The chain runs to 350 residues: GDSL esterase/lipase At2g04570 (350 aa).

A signal peptide spans 1–23; the sequence is MGHLKSLFTILFLIAMSSTVTFA. Residue Ser-35 is the Nucleophile of the active site. Residues Asn-98 and Asn-117 are each glycosylated (N-linked (GlcNAc...) asparagine). Residues Asp-325 and His-328 contribute to the active site. N-linked (GlcNAc...) asparagine glycosylation is present at Asn-343.

Belongs to the 'GDSL' lipolytic enzyme family.

It is found in the secreted. The protein is GDSL esterase/lipase At2g04570 of Arabidopsis thaliana (Mouse-ear cress).